Consider the following 765-residue polypeptide: Probable beta-glucosidase M (765 aa).

An N-terminal signal peptide occupies residues 1–19; it reads MHSISALLSLLGGLALSSA. N-linked (GlcNAc...) asparagine glycosylation is found at N24, N71, N93, N126, and N258. Residue D286 is part of the active site. N-linked (GlcNAc...) asparagine glycosylation is found at N314, N321, N432, N519, N541, and N647.

The protein belongs to the glycosyl hydrolase 3 family.

The protein localises to the secreted. The enzyme catalyses Hydrolysis of terminal, non-reducing beta-D-glucosyl residues with release of beta-D-glucose.. Its pathway is glycan metabolism; cellulose degradation. Functionally, beta-glucosidases are one of a number of cellulolytic enzymes involved in the degradation of cellulosic biomass. Catalyzes the last step releasing glucose from the inhibitory cellobiose. In Aspergillus niger (strain ATCC MYA-4892 / CBS 513.88 / FGSC A1513), this protein is Probable beta-glucosidase M (bglM).